The following is a 773-amino-acid chain: DNA gyrase subunit B (773 aa).

In terms of domain architecture, Toprim spans 416–530 (SEIFLVEGDS…QGHVFIAQAP (115 aa)). Glu422, Asp495, and Asp497 together coordinate Mg(2+).

Belongs to the type II topoisomerase GyrB family. In terms of assembly, heterotetramer, composed of two GyrA and two GyrB chains. In the heterotetramer, GyrA contains the active site tyrosine that forms a transient covalent intermediate with DNA, while GyrB binds cofactors and catalyzes ATP hydrolysis. Mg(2+) serves as cofactor. It depends on Mn(2+) as a cofactor. Ca(2+) is required as a cofactor.

The protein resides in the cytoplasm. It catalyses the reaction ATP-dependent breakage, passage and rejoining of double-stranded DNA.. In terms of biological role, a type II topoisomerase that negatively supercoils closed circular double-stranded (ds) DNA in an ATP-dependent manner to modulate DNA topology and maintain chromosomes in an underwound state. Negative supercoiling favors strand separation, and DNA replication, transcription, recombination and repair, all of which involve strand separation. Also able to catalyze the interconversion of other topological isomers of dsDNA rings, including catenanes and knotted rings. Type II topoisomerases break and join 2 DNA strands simultaneously in an ATP-dependent manner. This Helicobacter pylori (strain J99 / ATCC 700824) (Campylobacter pylori J99) protein is DNA gyrase subunit B.